A 270-amino-acid polypeptide reads, in one-letter code: 4-hydroxy-tetrahydrodipicolinate reductase (270 aa).

Residues 9 to 14 and glutamate 35 contribute to the NAD(+) site; that span reads GAGGRM. Arginine 36 provides a ligand contact to NADP(+). NAD(+)-binding positions include 99–101 and 123–126; these read GTT and ASNY. Histidine 156 acts as the Proton donor/acceptor in catalysis. Residue histidine 157 participates in (S)-2,3,4,5-tetrahydrodipicolinate binding. The active-site Proton donor is lysine 160. 166 to 167 contacts (S)-2,3,4,5-tetrahydrodipicolinate; it reads GT.

It belongs to the DapB family.

The protein localises to the cytoplasm. The catalysed reaction is (S)-2,3,4,5-tetrahydrodipicolinate + NAD(+) + H2O = (2S,4S)-4-hydroxy-2,3,4,5-tetrahydrodipicolinate + NADH + H(+). It carries out the reaction (S)-2,3,4,5-tetrahydrodipicolinate + NADP(+) + H2O = (2S,4S)-4-hydroxy-2,3,4,5-tetrahydrodipicolinate + NADPH + H(+). The protein operates within amino-acid biosynthesis; L-lysine biosynthesis via DAP pathway; (S)-tetrahydrodipicolinate from L-aspartate: step 4/4. In terms of biological role, catalyzes the conversion of 4-hydroxy-tetrahydrodipicolinate (HTPA) to tetrahydrodipicolinate. This Actinobacillus succinogenes (strain ATCC 55618 / DSM 22257 / CCUG 43843 / 130Z) protein is 4-hydroxy-tetrahydrodipicolinate reductase.